A 592-amino-acid polypeptide reads, in one-letter code: Aspartate--tRNA(Asp/Asn) ligase (592 aa).

Position 175 (Glu-175) interacts with L-aspartate. Residues 199–202 (QLFK) form an aspartate region. Arg-221 serves as a coordination point for L-aspartate. Residues 221–223 (RDE) and Gln-230 contribute to the ATP site. His-450 is a binding site for L-aspartate. Position 483 (Glu-483) interacts with ATP. L-aspartate is bound at residue Arg-490. 535 to 538 (GLDR) contributes to the ATP binding site.

It belongs to the class-II aminoacyl-tRNA synthetase family. Type 1 subfamily. Homodimer.

The protein localises to the cytoplasm. It carries out the reaction tRNA(Asx) + L-aspartate + ATP = L-aspartyl-tRNA(Asx) + AMP + diphosphate. Functionally, aspartyl-tRNA synthetase with relaxed tRNA specificity since it is able to aspartylate not only its cognate tRNA(Asp) but also tRNA(Asn). Reaction proceeds in two steps: L-aspartate is first activated by ATP to form Asp-AMP and then transferred to the acceptor end of tRNA(Asp/Asn). The protein is Aspartate--tRNA(Asp/Asn) ligase of Acinetobacter baumannii (strain AB307-0294).